Consider the following 126-residue polypeptide: Major sperm protein 2 (126 aa).

Ala2 carries the post-translational modification N-acetylalanine. In terms of domain architecture, MSP spans 8–125 (DIATMPNQKV…RRKNLPIEYN (118 aa)).

In terms of tissue distribution, sperm.

Its subcellular location is the cell projection. The protein resides in the pseudopodium. It localises to the cytoplasm. The protein localises to the cytoskeleton. In terms of biological role, central component in molecular interactions underlying sperm crawling. Forms an extensive filament system that extends from sperm villipoda, along the leading edge of the pseudopod. The polypeptide is Major sperm protein 2 (MSP-2) (Globodera rostochiensis (Golden nematode worm)).